We begin with the raw amino-acid sequence, 67 residues long: Tachystatin-A2 (67 aa).

The first 23 residues, 1-23 (MKLQNTLILIGCLFLMGAMIGDA), serve as a signal peptide directing secretion. Cystine bridges form between Cys27–Cys47, Cys34–Cys52, and Cys46–Cys64.

In terms of tissue distribution, granular hemocytes, small secretory granules.

The protein localises to the secreted. Functionally, exhibits stronger antimicrobial activity against the Gram-positive bacteria (S.aureus (IC(50)=4.2 ug/ml)) and fungi (C.albicans (IC(50)=3.0 ug/ml) and P.pastoris (IC(50)=0.5 ug/ml)) than Gram-negative bacteria (E.coli (IC(50)=25 ug/ml)). Binds to chitin (8.4 uM are required to obtain 50% of binding). Does not cause hemolysis on sheep erythrocytes. Has no blocking activity on the P-type calcium channel. Has also been shown to weakly inhibit Kv1.2/KCNA2 voltage-gated potassium channels and TRPV1 receptors. In Tachypleus tridentatus (Japanese horseshoe crab), this protein is Tachystatin-A2.